A 142-amino-acid chain; its full sequence is MAAAVAAAGAGEPQSPDELLPKGDAEKPEEELEEDDDEELDETLSERLWGLTEMFPERVRSAAGATFDLSLFVAQKMYRFSRAALWIGTTSFMILVLPVVFETEKLQMEQQQQLQQRQILLGPNTGLSGGMPGALPSLPGKI.

Residues 1–11 (MAAAVAAAGAG) show a composition bias toward low complexity. The interval 1-42 (MAAAVAAAGAGEPQSPDELLPKGDAEKPEEELEEDDDEELDE) is disordered. N-acetylalanine is present on A2. Over 2–83 (AAAVAAAGAG…AQKMYRFSRA (82 aa)) the chain is Cytoplasmic. S15 is subject to Phosphoserine. Residues 27–42 (KPEEELEEDDDEELDE) are compositionally biased toward acidic residues. The tract at residues 41-50 (DETLSERLWG) is import sequence; necessary for mitochondrion outer membrane localization and integration in the TOM complex. T43 carries the post-translational modification Phosphothreonine. Residue S45 is modified to Phosphoserine. The TMD; necessary for mitochondrion outer membrane localization and integration in the TOM complex stretch occupies residues 83–103 (AALWIGTTSFMILVLPVVFET). The helical transmembrane segment at 84–103 (ALWIGTTSFMILVLPVVFET) threads the bilayer. The Mitochondrial intermembrane portion of the chain corresponds to 104–142 (EKLQMEQQQQLQQRQILLGPNTGLSGGMPGALPSLPGKI). Residues 123–142 (PNTGLSGGMPGALPSLPGKI) form a C-tail signal; necessary for mitochondrion outer membrane localization and integration in the TOM complex region.

This sequence belongs to the Tom22 family. As to quaternary structure, forms part of the preprotein translocase complex of the outer mitochondrial membrane (TOM complex) which consists of at least 7 different proteins (TOMM5, TOMM6, TOMM7, TOMM20, TOMM22, TOMM40 and TOMM70). Interacts with TOMM40. Interacts with PPP2R2B. As to expression, ubiquitous.

The protein resides in the mitochondrion outer membrane. In terms of biological role, central receptor component of the translocase of the outer membrane of mitochondria (TOM complex) responsible for the recognition and translocation of cytosolically synthesized mitochondrial preproteins. Together with the peripheral receptor TOM20 functions as the transit peptide receptor and facilitates the movement of preproteins into the translocation pore. Required for the translocation across the mitochondrial outer membrane of cytochrome P450 monooxygenases. This Homo sapiens (Human) protein is Mitochondrial import receptor subunit TOM22 homolog (TOMM22).